The sequence spans 182 residues: Testis-expressed protein 29 (182 aa).

The Extracellular segment spans residues Met-1 to Pro-56. Residues Ile-57–Ile-77 form a helical membrane-spanning segment. At Ile-78–Pro-182 the chain is on the cytoplasmic side. Residues Leu-91–Pro-182 form a disordered region. A compositionally biased stretch (low complexity) spans Arg-115–Ala-170. Positions Thr-171–Pro-182 are enriched in pro residues.

The protein resides in the membrane. The polypeptide is Testis-expressed protein 29 (Tex29) (Rattus norvegicus (Rat)).